A 316-amino-acid polypeptide reads, in one-letter code: 4-hydroxy-3-methylbut-2-enyl diphosphate reductase (316 aa).

Cys-12 contacts [4Fe-4S] cluster. Residues His-41 and His-74 each contribute to the (2E)-4-hydroxy-3-methylbut-2-enyl diphosphate site. Dimethylallyl diphosphate-binding residues include His-41 and His-74. 2 residues coordinate isopentenyl diphosphate: His-41 and His-74. Cys-96 contributes to the [4Fe-4S] cluster binding site. His-124 is a (2E)-4-hydroxy-3-methylbut-2-enyl diphosphate binding site. A dimethylallyl diphosphate-binding site is contributed by His-124. Residue His-124 participates in isopentenyl diphosphate binding. Catalysis depends on Glu-126, which acts as the Proton donor. Thr-169 provides a ligand contact to (2E)-4-hydroxy-3-methylbut-2-enyl diphosphate. Cys-199 is a [4Fe-4S] cluster binding site. (2E)-4-hydroxy-3-methylbut-2-enyl diphosphate is bound by residues Ser-227, Ser-228, Asn-229, and Ser-271. Ser-227, Ser-228, Asn-229, and Ser-271 together coordinate dimethylallyl diphosphate. Isopentenyl diphosphate-binding residues include Ser-227, Ser-228, Asn-229, and Ser-271.

It belongs to the IspH family. Requires [4Fe-4S] cluster as cofactor.

The catalysed reaction is isopentenyl diphosphate + 2 oxidized [2Fe-2S]-[ferredoxin] + H2O = (2E)-4-hydroxy-3-methylbut-2-enyl diphosphate + 2 reduced [2Fe-2S]-[ferredoxin] + 2 H(+). The enzyme catalyses dimethylallyl diphosphate + 2 oxidized [2Fe-2S]-[ferredoxin] + H2O = (2E)-4-hydroxy-3-methylbut-2-enyl diphosphate + 2 reduced [2Fe-2S]-[ferredoxin] + 2 H(+). It participates in isoprenoid biosynthesis; dimethylallyl diphosphate biosynthesis; dimethylallyl diphosphate from (2E)-4-hydroxy-3-methylbutenyl diphosphate: step 1/1. Its pathway is isoprenoid biosynthesis; isopentenyl diphosphate biosynthesis via DXP pathway; isopentenyl diphosphate from 1-deoxy-D-xylulose 5-phosphate: step 6/6. Its function is as follows. Catalyzes the conversion of 1-hydroxy-2-methyl-2-(E)-butenyl 4-diphosphate (HMBPP) into a mixture of isopentenyl diphosphate (IPP) and dimethylallyl diphosphate (DMAPP). Acts in the terminal step of the DOXP/MEP pathway for isoprenoid precursor biosynthesis. In Stenotrophomonas maltophilia (strain R551-3), this protein is 4-hydroxy-3-methylbut-2-enyl diphosphate reductase.